We begin with the raw amino-acid sequence, 389 residues long: Large envelope protein (389 aa).

An N-acetylmethionine modification is found at M1. A lipid anchor (N-myristoyl glycine; by host) is attached at G2. A pre-S1 region spans residues 2–108; sequence GQNLSTSNPL…PPLRDTHPQA (107 aa). The pre-S stretch occupies residues 2-163; sequence GQNLSTSNPL…FSRTGDPAPN (162 aa). Residues 2-170 are Virion surface; in external conformation-facing; the sequence is GQNLSTSNPL…APNMESITSG (169 aa). Topologically, residues 2 to 242 are intravirion; in internal conformation; the sequence is GQNLSTSNPL…PGYRWMCLRR (241 aa). The disordered stretch occupies residues 73-99; the sequence is IITTVPANPPPASTNRQSGRKPTPISP. Residues 109–163 are pre-S2; that stretch reads MHWNSTTFHQALQDPRVRGLYFPAGGSSSGTAYPVPDTASHISSIFSRTGDPAPN. Residues 171-191 form a helical membrane-spanning segment; sequence FLGPLLVLQAGFFLLTKILTI. At 192–242 the chain is on the intravirion; in external conformation side; sequence PQSLDSWWTSLNFLGGAPVCLGQNSQSPTSNHSPTSCPPICPGYRWMCLRR. Residues 243–263 form a helical membrane-spanning segment; the sequence is FIIFLFILLLCLIFLLVLLDY. Residues 264–337 lie on the Virion surface side of the membrane; sequence QGMLPVCPLI…WASVRFSWLS (74 aa). N309 carries N-linked (GlcNAc...) asparagine; by host glycosylation. Residues 338 to 358 form a helical membrane-spanning segment; the sequence is LLAPFVQWFAGLSPTVWLSVI. The Intravirion segment spans residues 359–364; sequence WMMWYW. The helical transmembrane segment at 365 to 387 threads the bilayer; it reads GPNLYNILSPFIPLLPIFFCLWV. The Virion surface segment spans residues 388–389; sequence YI.

Belongs to the orthohepadnavirus major surface antigen family. In terms of assembly, in its internal form (Li-HBsAg), interacts with the capsid protein and with the isoform S. Interacts with host chaperone CANX. Associates with host chaperone CANX through its pre-S2 N glycan; this association may be essential for isoform M proper secretion. As to quaternary structure, interacts with isoform L. Interacts with the antigens of satellite virus HDV (HDVAgs); this interaction is required for encapsidation of HDV genomic RNA. Isoform M is N-terminally acetylated by host at a ratio of 90%, and N-glycosylated by host at the pre-S2 region. In terms of processing, myristoylated.

The protein localises to the virion membrane. Its function is as follows. The large envelope protein exists in two topological conformations, one which is termed 'external' or Le-HBsAg and the other 'internal' or Li-HBsAg. In its external conformation the protein attaches the virus to cell receptors and thereby initiating infection. This interaction determines the species specificity and liver tropism. This attachment induces virion internalization predominantly through caveolin-mediated endocytosis. The large envelope protein also assures fusion between virion membrane and endosomal membrane. In its internal conformation the protein plays a role in virion morphogenesis and mediates the contact with the nucleocapsid like a matrix protein. In terms of biological role, the middle envelope protein plays an important role in the budding of the virion. It is involved in the induction of budding in a nucleocapsid independent way. In this process the majority of envelope proteins bud to form subviral lipoprotein particles of 22 nm of diameter that do not contain a nucleocapsid. The polypeptide is Large envelope protein (Gorilla gorilla (western gorilla)).